Here is a 197-residue protein sequence, read N- to C-terminus: Probable GTP-binding protein EngB (197 aa).

Positions 25-197 (SAPEIAFAGR…VRDEFFKFTR (173 aa)) constitute an EngB-type G domain. Residues 33-40 (GRSNVGKS), 60-64 (GCTRQ), 79-82 (DLPG), 146-149 (TKID), and 177-179 (ISV) contribute to the GTP site. Mg(2+) contacts are provided by S40 and T62.

The protein belongs to the TRAFAC class TrmE-Era-EngA-EngB-Septin-like GTPase superfamily. EngB GTPase family. It depends on Mg(2+) as a cofactor.

In terms of biological role, necessary for normal cell division and for the maintenance of normal septation. The polypeptide is Probable GTP-binding protein EngB (Wolbachia sp. subsp. Brugia malayi (strain TRS)).